The following is a 366-amino-acid chain: Spermidine/putrescine import ATP-binding protein PotA (366 aa).

The 232-residue stretch at 8–239 (IRFENVTKQF…PINKFVADFI (232 aa)) folds into the ABC transporter domain. 41-48 (GPSGCGKT) is an ATP binding site.

The protein belongs to the ABC transporter superfamily. Spermidine/putrescine importer (TC 3.A.1.11.1) family. The complex is composed of two ATP-binding proteins (PotA), two transmembrane proteins (PotB and PotC) and a solute-binding protein (PotD).

The protein resides in the cell membrane. The enzyme catalyses ATP + H2O + polyamine-[polyamine-binding protein]Side 1 = ADP + phosphate + polyamineSide 2 + [polyamine-binding protein]Side 1.. Part of the ABC transporter complex PotABCD involved in spermidine/putrescine import. Responsible for energy coupling to the transport system. In Listeria innocua serovar 6a (strain ATCC BAA-680 / CLIP 11262), this protein is Spermidine/putrescine import ATP-binding protein PotA.